A 106-amino-acid polypeptide reads, in one-letter code: Malonate decarboxylase acyl carrier protein (106 aa).

Serine 28 carries the O-(phosphoribosyl dephospho-coenzyme A)serine modification.

It belongs to the MdcC family. In terms of processing, covalently binds the prosthetic group of malonate decarboxylase.

The protein resides in the cytoplasm. Its function is as follows. Subunit of malonate decarboxylase, it is an acyl carrier protein to which acetyl and malonyl thioester residues are bound via a 2'-(5''-phosphoribosyl)-3'-dephospho-CoA prosthetic group and turn over during the catalytic mechanism. The polypeptide is Malonate decarboxylase acyl carrier protein (Stenotrophomonas maltophilia (strain R551-3)).